A 332-amino-acid polypeptide reads, in one-letter code: Cysteine and histidine-rich domain-containing protein 1 (332 aa).

Residue A2 is modified to N-acetylalanine. Positions 2–77 are interaction with PPP5C; sequence ALLCYNRACG…KPPEPVKPEV (76 aa). The Zn(2+) site is built by C5, C10, C24, H27, C42, and C43. CHORD domains follow at residues 5–64 and 157–216; these read CYNR…KGRH and CKNG…KGRH. Residue T47 is modified to Phosphothreonine. A Phosphoserine modification is found at S51. Zn(2+)-binding residues include C59, H64, C157, C162, C176, H179, C194, C195, C211, and H216. The tract at residues 62 to 82 is disordered; it reads GRHNSEKPPEPVKPEVKTTEK. The segment covering 64–82 has biased composition (basic and acidic residues); that stretch reads HNSEKPPEPVKPEVKTTEK. Positions 65–316 are interaction with HSP90AA1 and HSP90AB1; it reads NSEKPPEPVK…AEPMQWASLE (252 aa). The region spanning 227-316 is the CS domain; it reads VVPCRHDWHQ…AEPMQWASLE (90 aa).

As to quaternary structure, interacts with HSP90AA1, HSP90AB1, PPP5C, ROCK1 and ROCK2.

Its function is as follows. Regulates centrosome duplication, probably by inhibiting the kinase activity of ROCK2. Proposed to act as co-chaperone for HSP90. May play a role in the regulation of NOD1 via a HSP90 chaperone complex. In vitro, has intrinsic chaperone activity. This function may be achieved by inhibiting association of ROCK2 with NPM1. Plays a role in ensuring the localization of the tyrosine kinase receptor EGFR to the plasma membrane, and thus ensures the subsequent regulation of EGFR activity and EGF-induced actin cytoskeleton remodeling. Involved in stress response. Prevents tumorigenesis. The sequence is that of Cysteine and histidine-rich domain-containing protein 1 (CHORDC1) from Macaca fascicularis (Crab-eating macaque).